Here is a 466-residue protein sequence, read N- to C-terminus: Trigger factor (466 aa).

A PPIase FKBP-type domain is found at 166 to 245 (GDFAQIDLVA…LNAVKERELP (80 aa)). Disordered stretches follow at residues 313–332 (LEQESRLEDDEHRAEVTESS) and 424–466 (LPDD…AADK). The segment covering 426–444 (DDGEAVDEDATPEDTDAPA) has biased composition (acidic residues). Residues 453-466 (PKKKAAAKKKAADK) are compositionally biased toward basic residues.

This sequence belongs to the FKBP-type PPIase family. Tig subfamily.

The protein resides in the cytoplasm. The enzyme catalyses [protein]-peptidylproline (omega=180) = [protein]-peptidylproline (omega=0). Its function is as follows. Involved in protein export. Acts as a chaperone by maintaining the newly synthesized protein in an open conformation. Functions as a peptidyl-prolyl cis-trans isomerase. The polypeptide is Trigger factor (Leifsonia xyli subsp. xyli (strain CTCB07)).